Here is a 493-residue protein sequence, read N- to C-terminus: Probable mannosyl-oligosaccharide alpha-1,2-mannosidase 1B (493 aa).

Positions 1–18 (MHLPSLSVALALVSSSLA) are cleaved as a signal peptide. 2 N-linked (GlcNAc...) asparagine glycosylation sites follow: asparagine 87 and asparagine 174. Residues cysteine 324 and cysteine 353 are joined by a disulfide bond. Residue glutamate 367 is the Proton donor of the active site. N-linked (GlcNAc...) asparagine glycosylation occurs at asparagine 489.

Belongs to the glycosyl hydrolase 47 family. As to quaternary structure, monomer. Ca(2+) serves as cofactor. It depends on Mg(2+) as a cofactor.

The protein localises to the cytoplasmic vesicle lumen. It carries out the reaction N(4)-(alpha-D-Man-(1-&gt;2)-alpha-D-Man-(1-&gt;2)-alpha-D-Man-(1-&gt;3)-[alpha-D-Man-(1-&gt;2)-alpha-D-Man-(1-&gt;3)-[alpha-D-Man-(1-&gt;2)-alpha-D-Man-(1-&gt;6)]-alpha-D-Man-(1-&gt;6)]-beta-D-Man-(1-&gt;4)-beta-D-GlcNAc-(1-&gt;4)-beta-D-GlcNAc)-L-asparaginyl-[protein] (N-glucan mannose isomer 9A1,2,3B1,2,3) + 4 H2O = N(4)-(alpha-D-Man-(1-&gt;3)-[alpha-D-Man-(1-&gt;3)-[alpha-D-Man-(1-&gt;6)]-alpha-D-Man-(1-&gt;6)]-beta-D-Man-(1-&gt;4)-beta-D-GlcNAc-(1-&gt;4)-beta-D-GlcNAc)-L-asparaginyl-[protein] (N-glucan mannose isomer 5A1,2) + 4 beta-D-mannose. It catalyses the reaction N(4)-(alpha-D-Man-(1-&gt;2)-alpha-D-Man-(1-&gt;2)-alpha-D-Man-(1-&gt;3)-[alpha-D-Man-(1-&gt;3)-[alpha-D-Man-(1-&gt;2)-alpha-D-Man-(1-&gt;6)]-alpha-D-Man-(1-&gt;6)]-beta-D-Man-(1-&gt;4)-beta-D-GlcNAc-(1-&gt;4)-beta-D-GlcNAc)-L-asparaginyl-[protein] (N-glucan mannose isomer 8A1,2,3B1,3) + 3 H2O = N(4)-(alpha-D-Man-(1-&gt;3)-[alpha-D-Man-(1-&gt;3)-[alpha-D-Man-(1-&gt;6)]-alpha-D-Man-(1-&gt;6)]-beta-D-Man-(1-&gt;4)-beta-D-GlcNAc-(1-&gt;4)-beta-D-GlcNAc)-L-asparaginyl-[protein] (N-glucan mannose isomer 5A1,2) + 3 beta-D-mannose. It participates in protein modification; protein glycosylation. In terms of biological role, involved in the maturation of Asn-linked oligosaccharides. Progressively trims alpha-1,2-linked mannose residues from Man(9)GlcNAc(2) to produce Man(5)GlcNAc(2). The chain is Probable mannosyl-oligosaccharide alpha-1,2-mannosidase 1B (mns1B) from Aspergillus fumigatus (strain CBS 144.89 / FGSC A1163 / CEA10) (Neosartorya fumigata).